Consider the following 3396-residue polypeptide: Versican core protein (3396 aa).

Positions 1–20 (MFINIKSILWMCSTLIVTHA) are cleaved as a signal peptide. The region spanning 21-146 (LHKVKVGKSP…EDTQDTVSLT (126 aa)) is the Ig-like V-type domain. 5 disulfide bridges follow: Cys44-Cys130, Cys172-Cys243, Cys196-Cys217, Cys270-Cys345, and Cys294-Cys315. An N-linked (GlcNAc...) asparagine glycan is attached at Asn57. Link domains lie at 150-245 (VVFH…YCYV) and 251-347 (DVFH…YCFK). Asn330 carries N-linked (GlcNAc...) asparagine glycosylation. The GAG-alpha (glucosaminoglycan attachment domain) stretch occupies residues 348–1335 (PKEATTIDLS…IIEVRENKTG (988 aa)). The span at 420 to 430 (ATKLPTPTGST) shows a compositional bias: polar residues. Disordered regions lie at residues 420–439 (ATKL…MDDY) and 603–622 (STTV…MDDW). N-linked (GlcNAc...) asparagine glycosylation occurs at Asn615. Ser659 is a glycosylation site (O-linked (Xyl...) (chondroitin sulfate) serine). 2 N-linked (GlcNAc...) asparagine glycosylation sites follow: Asn782 and Asn809. 3 disordered regions span residues 807–829 (EDNT…LPPA), 1126–1154 (IGPK…TSSL), and 1277–1316 (REYF…PAST). Residues 811-824 (TSKPLESTEPSASS) show a composition bias toward polar residues. Residues 1143 to 1154 (EGSSTTGFTSSL) show a composition bias toward low complexity. Asn1332 and Asn1398 each carry an N-linked (GlcNAc...) asparagine glycan. Residues 1336-3089 (RMSDLSVIGH…VEGTAIYLPG (1754 aa)) are GAG-beta. Disordered stretches follow at residues 1420–1497 (VPKD…SGGE) and 1510–1539 (FESG…HTEP). Positions 1422–1433 (KDPEAAEARRGQ) are enriched in basic and acidic residues. N-linked (GlcNAc...) asparagine glycans are attached at residues Asn1442 and Asn1468. Residues 1469–1480 (ESTETTESLEVT) are compositionally biased toward low complexity. Positions 1517–1538 (KGAESVTERDTEVGHQAHEHTE) are enriched in basic and acidic residues. O-linked (Xyl...) (chondroitin sulfate) serine glycosylation is found at Ser1548 and Ser1631. N-linked (GlcNAc...) asparagine glycosylation occurs at Asn1663. Disordered stretches follow at residues 1717 to 1737 (STTV…TAST) and 1759 to 1789 (PNVA…MTDS). Over residues 1720 to 1729 (VEEKKRKEEE) the composition is skewed to basic and acidic residues. Polar residues predominate over residues 1760–1781 (NVATSSDSGTRKSFMSLTTPTQ). Residue Asn1898 is glycosylated (N-linked (GlcNAc...) asparagine). 2 O-linked (Xyl...) (chondroitin sulfate) serine glycosylation sites follow: Ser1935 and Ser1959. Disordered regions lie at residues 1962-1994 (AAFR…STMV), 2107-2134 (RQEI…NSPA), and 2168-2188 (KEMK…PDAN). The segment covering 1969–1978 (TSPSTVPTSV) has biased composition (low complexity). The span at 2111–2120 (ESETTSEEQI) shows a compositional bias: acidic residues. Phosphoserine; by FAM20C is present on Ser2116. N-linked (GlcNAc...) asparagine glycosylation is present at Asn2179. O-linked (Xyl...) (chondroitin sulfate) serine glycosylation is found at Ser2247 and Ser2254. N-linked (GlcNAc...) asparagine glycans are attached at residues Asn2272, Asn2280, Asn2360, Asn2385, and Asn2392. Disordered regions lie at residues 2371–2396 (TSRP…ETTT), 2445–2473 (SATT…EVPS), 2493–2518 (SEQN…STDG), and 2598–2617 (DTEV…DDST). 2 stretches are compositionally biased toward polar residues: residues 2445-2461 (SATT…TFVS) and 2496-2513 (NKSS…VSYE). The N-linked (GlcNAc...) asparagine glycan is linked to Asn2496. Ser2608 carries the phosphoserine modification. Thr2617 is subject to Phosphothreonine. An N-linked (GlcNAc...) asparagine glycan is attached at Asn2628. O-linked (Xyl...) (chondroitin sulfate) serine glycosylation is found at Ser2722, Ser2723, and Ser2767. Disordered regions lie at residues 2834-2856 (GSEA…DVGS) and 2881-2905 (EEYL…EDDG). A compositionally biased stretch (basic and acidic residues) spans 2896–2905 (TKLEPSEDDG). An N-linked (GlcNAc...) asparagine glycan is attached at Asn2934. The O-linked (Xyl...) (chondroitin sulfate) serine glycan is linked to Ser2941. The N-linked (GlcNAc...) asparagine glycan is linked to Asn3067. The EGF-like 1 domain maps to 3089–3125 (GPDRCKMNPCLNGGTCYPTETSYVCTCVPGYSGDQCE). 11 disulfide bridges follow: Cys3093–Cys3104, Cys3098–Cys3113, Cys3115–Cys3124, Cys3131–Cys3142, Cys3136–Cys3151, Cys3153–Cys3162, Cys3169–Cys3180, Cys3197–Cys3289, Cys3265–Cys3281, Cys3296–Cys3339, and Cys3325–Cys3352. The region spanning 3127–3163 (DFDECHSNPCRNGATCVDGFNTFRCLCLPSYVGALCE) is the EGF-like 2; calcium-binding domain. Residues 3176–3290 (FQGQCYKYFA…CNYHLTYTCK (115 aa)) enclose the C-type lectin domain. The region spanning 3294 to 3354 (VACGQPPVVE…WAIPKITCMN (61 aa)) is the Sushi domain. 2 N-linked (GlcNAc...) asparagine glycosylation sites follow: Asn3369 and Asn3379. The span at 3371–3380 (SSAKDNSINT) shows a compositional bias: polar residues. Residues 3371–3396 (SSAKDNSINTSKHDHRWSRRWQESRR) form a disordered region.

It belongs to the aggrecan/versican proteoglycan family. In terms of assembly, interacts with FBLN1. Phosphorylated by FAM20C in the extracellular medium. In terms of processing, proteolytically cleaved by ADAMTS5 and ADAMTS15 in the pericellular matrix surrounding myoblasts, facilitating myoblast contact and fusion which is required for skeletal muscle development and regeneration. As to expression, detected in placenta (at protein level). Detected in cerebrospinal fluid, fibroblasts and urine (at protein level). Expressed in the retina (at protein level). Cerebral white matter and plasma. Isoform V0: Expressed in normal brain, gliomas, medulloblastomas, schwannomas, neurofibromas, and meningiomas. Isoform V1: Expressed in normal brain, gliomas, medulloblastomas, schwannomas, neurofibromas, and meningiomas. Isoform V2: Restricted to normal brain and gliomas. Isoform V3: Found in all these tissues except medulloblastomas.

The protein localises to the secreted. It localises to the extracellular space. The protein resides in the extracellular matrix. It is found in the cell projection. Its subcellular location is the cilium. The protein localises to the photoreceptor outer segment. It localises to the interphotoreceptor matrix. Its function is as follows. May play a role in intercellular signaling and in connecting cells with the extracellular matrix. May take part in the regulation of cell motility, growth and differentiation. Binds hyaluronic acid. The chain is Versican core protein (VCAN) from Homo sapiens (Human).